We begin with the raw amino-acid sequence, 65 residues long: MGMRMVFTVFLLVVLATTVVSFTSDRASDGRNAAANDKASDLAALAVRGCCHDIFCKHNNPDICG.

An N-terminal signal peptide occupies residues 1 to 21 (MGMRMVFTVFLLVVLATTVVS). The propeptide occupies 22-48 (FTSDRASDGRNAAANDKASDLAALAVR). 2 disulfides stabilise this stretch: cysteine 50–cysteine 56 and cysteine 51–cysteine 64. Cysteine 64 carries the cysteine amide modification.

The protein belongs to the conotoxin A superfamily. In terms of tissue distribution, expressed by the venom duct.

The protein localises to the secreted. The polypeptide is Conotoxin Bu19 (Conus bullatus (Bubble cone)).